The chain runs to 719 residues: Plasmin and fibronectin-binding protein A (719 aa).

The signal sequence occupies residues 1–45; sequence MLKIVKKLEVLMKYFVPNEVFSIRKLKVGTCSVLLAISILGSQGI. 2 disordered regions span residues 56-76 and 109-128; these read PMAT…SPTV and IRSN…TSTN. PbH1 repeat units lie at residues 287-310, 362-384, 397-419, 497-523, and 525-546; these read SNNV…QIAG, SENV…LVTA, PSNI…RFTG, VSDI…ELLR, and SDNL…VIED. Residues 601–658 are a coiled coil; that stretch reads NNLSDKNEKEKNKEEKQSNSNNVIDSNQKNGEFNSSKDNRQMNDKIDNKQDNKTEEVN. The span at 606 to 617 shows a compositional bias: basic and acidic residues; the sequence is KNEKEKNKEEKQ. Residues 606–655 are disordered; that stretch reads KNEKEKNKEEKQSNSNNVIDSNQKNGEFNSSKDNRQMNDKIDNKQDNKTE. Residues 623–634 show a composition bias toward polar residues; sequence VIDSNQKNGEFN. Positions 635–655 are enriched in basic and acidic residues; it reads SSKDNRQMNDKIDNKQDNKTE. Residues 685 to 689 carry the LPXTG sorting signal motif; it reads LPKTG. Residue threonine 688 is modified to Pentaglycyl murein peptidoglycan amidated threonine. The propeptide at 689 to 719 is removed by sortase; it reads GSNKIMELFLTVTGIGLLLTLKGLKYYGKDK.

It localises to the secreted. The protein resides in the cell wall. In terms of biological role, acts as a fibronectin-dependent adhesin and invasin. Binds host (in this case human) fibronectin, plasmin, plasminogen, and human serum albumin. Where the bacteria adhere to human cells there is major recruitment of microvilli which seem to fuse to cover the streptococcal chains. Antibodies to this protein reduce bacterial growth in human blood. This Streptococcus pneumoniae (strain ATCC BAA-255 / R6) protein is Plasmin and fibronectin-binding protein A (pfbA).